A 139-amino-acid polypeptide reads, in one-letter code: Nucleoside diphosphate kinase (139 aa).

The ATP site is built by K10, F58, R86, T92, R104, and N114. The active-site Pros-phosphohistidine intermediate is the H117.

The protein belongs to the NDK family. In terms of assembly, homotetramer. Mg(2+) is required as a cofactor.

It is found in the cytoplasm. The catalysed reaction is a 2'-deoxyribonucleoside 5'-diphosphate + ATP = a 2'-deoxyribonucleoside 5'-triphosphate + ADP. It carries out the reaction a ribonucleoside 5'-diphosphate + ATP = a ribonucleoside 5'-triphosphate + ADP. In terms of biological role, major role in the synthesis of nucleoside triphosphates other than ATP. The ATP gamma phosphate is transferred to the NDP beta phosphate via a ping-pong mechanism, using a phosphorylated active-site intermediate. The protein is Nucleoside diphosphate kinase of Nocardia farcinica (strain IFM 10152).